We begin with the raw amino-acid sequence, 338 residues long: Glutamate/glutamine/aspartate/asparagine-binding protein BztA (338 aa).

An N-terminal signal peptide occupies residues 1–22; sequence MKKSAFFGSVALAALVAGAASA.

It belongs to the bacterial solute-binding protein 3 family.

It is found in the periplasm. Functionally, part of a binding-protein-dependent transport system for glutamate, glutamine, aspartate and asparagine. In Rhodobacter capsulatus (strain ATCC BAA-309 / NBRC 16581 / SB1003), this protein is Glutamate/glutamine/aspartate/asparagine-binding protein BztA (bztA).